A 266-amino-acid chain; its full sequence is Small ribosomal subunit protein uS2 (266 aa).

The protein belongs to the universal ribosomal protein uS2 family.

The polypeptide is Small ribosomal subunit protein uS2 (Corynebacterium diphtheriae (strain ATCC 700971 / NCTC 13129 / Biotype gravis)).